A 270-amino-acid polypeptide reads, in one-letter code: Protein-ADP-ribose hydrolase (270 aa).

Residues 73–267 (VSVKDCQKTN…LYDTYLQKEN (195 aa)) form the Macro domain. Positions 92, 93, and 106 each coordinate ADP-D-ribose. 3 residues coordinate Zn(2+): Cys112, His117, and Cys119. Residues Cys119, Ile120, Asp121, Ser212, Thr213, Gly214, Glu215, and Phe216 each coordinate ADP-D-ribose.

This sequence belongs to the MacroD-type family. Zn-Macro subfamily. In terms of assembly, monomer. Interacts with the lipoylated form of GcvH-L. Zn(2+) serves as cofactor.

The catalysed reaction is 4-O-(ADP-D-ribosyl)-L-aspartyl-[protein] + H2O = L-aspartyl-[protein] + ADP-D-ribose + H(+). The enzyme catalyses 5-O-(ADP-D-ribosyl)-L-glutamyl-[protein] + H2O = L-glutamyl-[protein] + ADP-D-ribose + H(+). It carries out the reaction S-(ADP-D-ribosyl)-L-cysteinyl-[protein] + H2O = ADP-D-ribose + L-cysteinyl-[protein]. ADP-ribosylhydrolase that specifically reverses the SirTM-mediated mono-ADP-ribosylation at an asparatate residue of GcvH-L (SpyM50867), by releasing ADP-ribose from the target protein. May play a role in the regulation of the response to host-induced oxidative stress. It can also hydrolyze ADP-ribosyl-glutamate bonds and ADP-ribosyl-cysteine bonds. In vitro, it can remove the ADP-ribosyl modification from the human mono-ADP-ribosylated PARP1 E988Q mutant, which is primarily modified on glutamate site with only minor aspartate contribution. It can also hydrolyze the ADP-ribosyl-cysteinyl glycosidic bond of a Cys-ADP-ribosylated synthetic peptide. In Streptococcus pyogenes serotype M5 (strain Manfredo), this protein is Protein-ADP-ribose hydrolase.